The primary structure comprises 754 residues: Putative sulfate transporter YPR003C (754 aa).

Positions 1 to 91 (MTSNNSLLGR…NTSNTNNNDS (91 aa)) are disordered. Residues 1–118 (MTSNNSLLGR…SWLPEYTFNK (118 aa)) lie on the Cytoplasmic side of the membrane. The span at 25–45 (RSVDQRDTFSDNFDYDKDSSN) shows a compositional bias: basic and acidic residues. Residues 65–89 (NSRSGCTNNTNNTNNTSNTSNTNNN) show a composition bias toward low complexity. The helical transmembrane segment at 119–139 (LWGDVIAGISVASFQIPLALS) threads the bilayer. Over 140–146 (YTTSIAH) the chain is Lumenal. The chain crosses the membrane as a helical span at residues 147 to 167 (VPPLCGLYSLAISPFVYGILG). Residues 168-172 (SVPQM) are Cytoplasmic-facing. A helical membrane pass occupies residues 173–193 (IVGPESAISLVVGQAVESITL). Residues 194-199 (HKENVS) are Lumenal-facing. The helical transmembrane segment at 200–220 (LIDISTVITFVSGTILLFSGI) threads the bilayer. Over 221–232 (SRFGFLGNVLSK) the chain is Cytoplasmic. Residues 233–253 (ALLRGFISSVGLVMIINSLIS) form a helical membrane-spanning segment. The Lumenal portion of the chain corresponds to 254–282 (ELKLDKFLVSLPQHYHTPFEKILFLIDYA). A helical membrane pass occupies residues 283 to 303 (PAQYHIPTAIFSGCCLIVLFL). The Cytoplasmic segment spans residues 304–317 (TRLLKRKLMKYHKS). Residues 318–338 (AIFFPDILLVVIVTILISMKF) traverse the membrane as a helical segment. Residues 339-370 (NLKHRYGISIIGDFSMDNFDELKNPLTRPRRK) are Lumenal-facing. The helical transmembrane segment at 371 to 391 (LIPDLFSASLIVAMLGFFEST) threads the bilayer. Residues 392–410 (TASKSLGTTYNLTVSSNRE) are Cytoplasmic-facing. The chain crosses the membrane as a helical span at residues 411–431 (LVALGFMNIVISLFGALPAFG). Residues 432-450 (GYGRSKINALSGAQSVMSG) lie on the Lumenal side of the membrane. A helical membrane pass occupies residues 451–471 (VFMGVITLITMNLLLQFVHYI). At 472 to 474 (PNC) the chain is on the cytoplasmic side. The helical transmembrane segment at 475–495 (VLSVITTIIGISLLEEVPGDI) threads the bilayer. Residues 496-517 (KFHLRCGGFSELFVFAVTFCTT) lie on the Lumenal side of the membrane. A helical transmembrane segment spans residues 518-538 (IFYSIEAGICIGCVYSIINII). Residues 539–754 (KHSAKSRIQI…SNTLFNSSLV (216 aa)) are Cytoplasmic-facing. One can recognise an STAS domain in the interval 574 to 725 (DVEGTEEIEG…DSIDAALYEI (152 aa)).

It belongs to the SLC26A/SulP transporter (TC 2.A.53) family.

Its subcellular location is the endoplasmic reticulum membrane. Its function is as follows. Possible sulfate transporter. The polypeptide is Putative sulfate transporter YPR003C (Saccharomyces cerevisiae (strain ATCC 204508 / S288c) (Baker's yeast)).